Consider the following 153-residue polypeptide: Myosin regulatory light chain LC-2, mantle muscle (153 aa).

A1 bears the Blocked amino end (Ala) mark. EF-hand domains follow at residues R13 to V48 and D82 to N117. Residues D26, D28, D30, and D37 each contribute to the Ca(2+) site.

In terms of biological role, in molluscan muscle, calcium regulation is associated with myosin rather than with actin. Muscle myosin contains two types of light chains: the catalytic light chain, essential for ATPase activity, and the regulatory light chain, a calcium-binding protein responsible for Ca(2+) dependent binding and Ca(2+) dependent Mg-ATPase activity. The sequence is that of Myosin regulatory light chain LC-2, mantle muscle from Todarodes pacificus (Japanese flying squid).